Here is a 307-residue protein sequence, read N- to C-terminus: Protease HtpX homolog (307 aa).

2 consecutive transmembrane segments (helical) span residues 7–27 (AILLAGLTGLFMGVGYLIGGA) and 28–48 (SGATIALVVAAATNLFAYWNS). Residue His-130 coordinates Zn(2+). Residue Glu-131 is part of the active site. His-134 provides a ligand contact to Zn(2+). The next 2 membrane-spanning stretches (helical) occupy residues 145–165 (ITATIAGAISMLAQFGMFFGG) and 171–191 (GPGIIGSLAMMILAPFGAMLV). Residue Glu-200 coordinates Zn(2+). The interval 277–307 (AGQSGGGLAPGGPPPDPSSPWNKGSRRGPWG) is disordered.

It belongs to the peptidase M48B family. Zn(2+) serves as cofactor.

The protein localises to the cell inner membrane. The sequence is that of Protease HtpX homolog from Nitrobacter winogradskyi (strain ATCC 25391 / DSM 10237 / CIP 104748 / NCIMB 11846 / Nb-255).